The primary structure comprises 232 residues: Orotate phosphoribosyltransferase (232 aa).

Residues R107, K108, K111, H113, and 133 to 141 each bind 5-phospho-alpha-D-ribose 1-diphosphate; that span reads EDLTTAGGS. T137 contributes to the orotate binding site.

The protein belongs to the purine/pyrimidine phosphoribosyltransferase family. PyrE subfamily. In terms of assembly, homodimer. Mg(2+) is required as a cofactor.

The enzyme catalyses orotidine 5'-phosphate + diphosphate = orotate + 5-phospho-alpha-D-ribose 1-diphosphate. Its pathway is pyrimidine metabolism; UMP biosynthesis via de novo pathway; UMP from orotate: step 1/2. Functionally, catalyzes the transfer of a ribosyl phosphate group from 5-phosphoribose 1-diphosphate to orotate, leading to the formation of orotidine monophosphate (OMP). This Sinorhizobium medicae (strain WSM419) (Ensifer medicae) protein is Orotate phosphoribosyltransferase.